Here is a 249-residue protein sequence, read N- to C-terminus: MLKKIKISLILALGLTSLQAFGQENPDVKIEKLKDNLYVYTTYNTFNGTKYAANAVYLVTDKGVVVIDCPWGEDKFKSFTDEIYKKHGKKVIMNIATHSHDDRAGGLEYFGKIGAKTYSTKMTDSILAKENKPRAQYTFDNNKSFKVGKSEFQVYYPGKGHTADNVVVWFPKEKVLVGGCIIKSADSKDLGYIGEAYVNDWTQSVHNIQQKFSGAQYVVAGHDDWKDQRSIQHTLDLINEYQQKQKASN.

A signal peptide spans 1–22 (MLKKIKISLILALGLTSLQAFG). Zn(2+) contacts are provided by histidine 98, histidine 100, aspartate 102, histidine 161, and cysteine 180. Lysine 183 is a binding site for substrate. Histidine 222 lines the Zn(2+) pocket.

The protein belongs to the metallo-beta-lactamase superfamily. Class-B beta-lactamase family. In terms of assembly, monomer. It depends on Zn(2+) as a cofactor.

It localises to the periplasm. It carries out the reaction a beta-lactam + H2O = a substituted beta-amino acid. With respect to regulation, inhibited by chelating agents such as EDTA, 1-10 phenanthroline and pyridine-2,6-dicarboxylic acid. Its function is as follows. Confers resistance to the different beta-lactams antibiotics (penicillin, cephalosporin and carbapenem) via the hydrolysis of the beta-lactam ring. The chain is Metallo-beta-lactamase type 2 (blaB1) from Elizabethkingia meningoseptica (Chryseobacterium meningosepticum).